Consider the following 265-residue polypeptide: Polyphosphate glucokinase (265 aa).

Positions 1–18 (MTSTGPETSETPGATTQR) are enriched in polar residues. A disordered region spans residues 1–22 (MTSTGPETSETPGATTQRHGFG). 24–29 (DVGGSG) is an ATP binding site.

It belongs to the ROK (NagC/XylR) family. In terms of assembly, homodimer.

It catalyses the reaction [phosphate](n) + D-glucose = [phosphate](n-1) + D-glucose 6-phosphate + H(+). It carries out the reaction D-glucose + ATP = D-glucose 6-phosphate + ADP + H(+). Catalyzes the phosphorylation of glucose using polyphosphate or ATP as the phosphoryl donor. Polyphosphate, rather than ATP, seems to be the major phosphate donor for the enzyme in M.tuberculosis. The sequence is that of Polyphosphate glucokinase (ppgK) from Mycobacterium tuberculosis (strain CDC 1551 / Oshkosh).